Reading from the N-terminus, the 143-residue chain is Flagellar assembly factor FliW (143 aa).

It belongs to the FliW family. Interacts with translational regulator CsrA and flagellin(s).

Its subcellular location is the cytoplasm. Functionally, acts as an anti-CsrA protein, binds CsrA and prevents it from repressing translation of its target genes, one of which is flagellin. Binds to flagellin and participates in the assembly of the flagellum. This chain is Flagellar assembly factor FliW, found in Clostridium novyi (strain NT).